Reading from the N-terminus, the 130-residue chain is Small ribosomal subunit protein uS11c (130 aa).

Belongs to the universal ribosomal protein uS11 family. In terms of assembly, part of the 30S ribosomal subunit.

It is found in the plastid. The protein localises to the chloroplast. In Mesostigma viride (Green alga), this protein is Small ribosomal subunit protein uS11c.